A 717-amino-acid polypeptide reads, in one-letter code: DNA ligase (717 aa).

NAD(+) contacts are provided by residues 44 to 48 (DADYD), 93 to 94 (SL), and Glu-127. Residue Lys-129 is the N6-AMP-lysine intermediate of the active site. The NAD(+) site is built by Arg-150, Glu-186, Lys-302, and Lys-326. Zn(2+)-binding residues include Cys-431, Cys-434, Cys-455, and Cys-461. Residues 639–717 (ATDSPVAGKT…EDEWLALIGG (79 aa)) form the BRCT domain.

This sequence belongs to the NAD-dependent DNA ligase family. LigA subfamily. The cofactor is Mg(2+). Requires Mn(2+) as cofactor.

It catalyses the reaction NAD(+) + (deoxyribonucleotide)n-3'-hydroxyl + 5'-phospho-(deoxyribonucleotide)m = (deoxyribonucleotide)n+m + AMP + beta-nicotinamide D-nucleotide.. Functionally, DNA ligase that catalyzes the formation of phosphodiester linkages between 5'-phosphoryl and 3'-hydroxyl groups in double-stranded DNA using NAD as a coenzyme and as the energy source for the reaction. It is essential for DNA replication and repair of damaged DNA. The polypeptide is DNA ligase (Rhizobium meliloti (strain 1021) (Ensifer meliloti)).